The chain runs to 506 residues: Trans-cinnamate 4-monooxygenase C4H1 (506 aa).

2 short sequence motifs (nuclear localization signal) span residues 161–168 (VKKMPESA) and 247–254 (QRRLQLFK). Residue C448 coordinates heme.

Belongs to the cytochrome P450 family. Requires heme as cofactor.

It is found in the nucleus. The catalysed reaction is (E)-cinnamate + reduced [NADPH--hemoprotein reductase] + O2 = (E)-4-coumarate + oxidized [NADPH--hemoprotein reductase] + H2O + H(+). It functions in the pathway phenylpropanoid metabolism; trans-4-coumarate biosynthesis; trans-4-coumarate from trans-cinnamate: step 1/1. Functionally, component of the floral volatile benzenoid/phenylpropanoid (FVBP) biosynthetic pathway that controls carbon flux to pigments essential for pollination or UV protection, to numerous pytoalexins synthesized by plants when challenged by pathogens, and to lignins. This chain is Trans-cinnamate 4-monooxygenase C4H1, found in Petunia hybrida (Petunia).